Here is a 206-residue protein sequence, read N- to C-terminus: Protein GrpE (206 aa).

This sequence belongs to the GrpE family. Homodimer.

It localises to the cytoplasm. In terms of biological role, participates actively in the response to hyperosmotic and heat shock by preventing the aggregation of stress-denatured proteins, in association with DnaK and GrpE. It is the nucleotide exchange factor for DnaK and may function as a thermosensor. Unfolded proteins bind initially to DnaJ; upon interaction with the DnaJ-bound protein, DnaK hydrolyzes its bound ATP, resulting in the formation of a stable complex. GrpE releases ADP from DnaK; ATP binding to DnaK triggers the release of the substrate protein, thus completing the reaction cycle. Several rounds of ATP-dependent interactions between DnaJ, DnaK and GrpE are required for fully efficient folding. This is Protein GrpE from Psychromonas ingrahamii (strain DSM 17664 / CCUG 51855 / 37).